Here is a 418-residue protein sequence, read N- to C-terminus: NADH-quinone oxidoreductase subunit D (418 aa).

This sequence belongs to the complex I 49 kDa subunit family. As to quaternary structure, NDH-1 is composed of 14 different subunits. Subunits NuoB, C, D, E, F, and G constitute the peripheral sector of the complex.

The protein resides in the cell inner membrane. The catalysed reaction is a quinone + NADH + 5 H(+)(in) = a quinol + NAD(+) + 4 H(+)(out). NDH-1 shuttles electrons from NADH, via FMN and iron-sulfur (Fe-S) centers, to quinones in the respiratory chain. The immediate electron acceptor for the enzyme in this species is believed to be ubiquinone. Couples the redox reaction to proton translocation (for every two electrons transferred, four hydrogen ions are translocated across the cytoplasmic membrane), and thus conserves the redox energy in a proton gradient. In Methylacidiphilum infernorum (isolate V4) (Methylokorus infernorum (strain V4)), this protein is NADH-quinone oxidoreductase subunit D.